The sequence spans 326 residues: Delta-aminolevulinic acid dehydratase (326 aa).

3 residues coordinate Zn(2+): C125, C127, and C135. K200 functions as the Schiff-base intermediate with substrate in the catalytic mechanism. 5-aminolevulinate-binding residues include R210 and R222. E238 lines the Mg(2+) pocket. Catalysis depends on K253, which acts as the Schiff-base intermediate with substrate. Residue S279 coordinates 5-aminolevulinate.

The protein belongs to the ALAD family. Homooctamer. The cofactor is Zn(2+).

The enzyme catalyses 2 5-aminolevulinate = porphobilinogen + 2 H2O + H(+). Its pathway is porphyrin-containing compound metabolism; protoporphyrin-IX biosynthesis; coproporphyrinogen-III from 5-aminolevulinate: step 1/4. In terms of biological role, catalyzes an early step in the biosynthesis of tetrapyrroles. Binds two molecules of 5-aminolevulinate per subunit, each at a distinct site, and catalyzes their condensation to form porphobilinogen. This Methanothermobacter thermautotrophicus (strain ATCC 29096 / DSM 1053 / JCM 10044 / NBRC 100330 / Delta H) (Methanobacterium thermoautotrophicum) protein is Delta-aminolevulinic acid dehydratase (hemB).